Reading from the N-terminus, the 173-residue chain is MKKHRKKRSSSTQVQALAQHICMSAHKARRVIDQIRGRSYEKTLMLLELMPYRASYPILKLVYSAAANASHNKGFNKADLVISQAEVNGGTIIKKLKPRARGHSYPIKRPTCHINIVLKDQSKTKTQQDFVLENKGVFKDTIIERYPEKEREREREINFFKRLLRFPNWNRDK.

Belongs to the universal ribosomal protein uL22 family. In terms of assembly, part of the 50S ribosomal subunit.

Its subcellular location is the plastid. It localises to the chloroplast. Its function is as follows. This protein binds specifically to 23S rRNA. Functionally, the globular domain of the protein is located near the polypeptide exit tunnel on the outside of the subunit, while an extended beta-hairpin is found that lines the wall of the exit tunnel in the center of the 70S ribosome. This chain is Large ribosomal subunit protein uL22c (rpl22), found in Drimys granadensis.